A 476-amino-acid polypeptide reads, in one-letter code: Glutamate mutase epsilon subunit (476 aa).

Arg-62 is a binding site for L-glutamate. Gly-64 contributes to the adenosylcob(III)alamin binding site. Arg-96 contacts L-glutamate. Asn-119 lines the adenosylcob(III)alamin pocket. L-glutamate-binding positions include 145 to 146 (RH), Glu-167, and Tyr-173. Position 176 (Pro-176) interacts with adenosylcob(III)alamin. Tyr-177 provides a ligand contact to L-glutamate. Adenosylcob(III)alamin is bound by residues Phe-289, Lys-318, and Glu-322.

The protein belongs to the methylaspartate mutase GlmE subunit family. In terms of assembly, heterotetramer composed of 2 epsilon subunits (GlmE) and 2 sigma subunits (GlmS). GlmE exists as a homodimer and GlmS as a monomer. Adenosylcob(III)alamin is required as a cofactor.

It catalyses the reaction (2S,3S)-3-methyl-L-aspartate = L-glutamate. It participates in amino-acid degradation; L-glutamate degradation via mesaconate pathway; acetate and pyruvate from L-glutamate: step 1/4. Its function is as follows. Catalyzes the carbon skeleton rearrangement of L-glutamate to L-threo-3-methylaspartate ((2S,3S)-3-methylaspartate). The sequence is that of Glutamate mutase epsilon subunit from Halobacterium salinarum (strain ATCC 700922 / JCM 11081 / NRC-1) (Halobacterium halobium).